The following is a 206-amino-acid chain: Protein GET1 (206 aa).

Topologically, residues 1–4 are lumenal; the sequence is MPSL. Residues 5 to 24 traverse the membrane as a helical segment; the sequence is LITVLFLNVIIYVINTVGAA. The Cytoplasmic portion of the chain corresponds to 25–110; that stretch reads TVDGLLWLLY…TFDMTIKIAR (86 aa). Residues 75-100 are a coiled coil; that stretch reads AKLRRRHDKAMEAYEAKNNELTQSKS. The chain crosses the membrane as a helical span at residues 111–131; the sequence is WAATSGLMLFLQFWYSKTPIF. Topologically, residues 132-155 are lumenal; the sequence is TLPPGWIPWQVQWVLSFPRAPMGT. Residues 156 to 172 traverse the membrane as a helical segment; the sequence is VSIQIWGGACATVVALV. At 173 to 206 the chain is on the cytoplasmic side; that stretch reads GDAMRASLAYVSKPKIDRIKLGATMEGKEGKKRQ.

Belongs to the WRB/GET1 family. In terms of assembly, interacts with GET3.

The protein resides in the endoplasmic reticulum membrane. Its function is as follows. Required for the post-translational delivery of tail-anchored (TA) proteins to the endoplasmic reticulum. Acts as a membrane receptor for soluble GET3, which recognizes and selectively binds the transmembrane domain of TA proteins in the cytosol. The polypeptide is Protein GET1 (Ajellomyces capsulatus (strain NAm1 / WU24) (Darling's disease fungus)).